The chain runs to 37 residues: Large ribosomal subunit protein bL36 (37 aa).

It belongs to the bacterial ribosomal protein bL36 family.

This Magnetococcus marinus (strain ATCC BAA-1437 / JCM 17883 / MC-1) protein is Large ribosomal subunit protein bL36.